Consider the following 499-residue polypeptide: Putative antiporter subunit mnhD2 (499 aa).

A run of 14 helical transmembrane segments spans residues 3–23, 33–53, 79–99, 109–129, 131–151, 162–182, 210–230, 241–261, 272–292, 309–329, 331–351, 370–390, 404–424, and 452–472; these read LSNL…ILVF, YLYL…LIYV, LSLI…AYGF, YHLP…FLTS, LFNL…LITL, IIYV…IGLL, ISLI…FMWL, LAAL…IRFF, IHPL…IGVI, IGFI…GAIF, LVND…LVYI, FGVA…FSGF, GNYI…YSLF, and ILSI…VVLN.

This sequence belongs to the CPA3 antiporters (TC 2.A.63) subunit D family. As to quaternary structure, may form a heterooligomeric complex that consists of seven subunits: mnhA2, mnhB2, mnhC2, mnhD2, mnhE2, mnhF2 and mnhG2.

The protein localises to the cell membrane. Its function is as follows. Expression of the mnh2 operon in E.coli is not able to catalyze Na(+)Li(+)/H(+) antiport. It does however confer higher growth rates than the control strain at up to pH 9.5. The operon may encode an NADH-ubiquinone oxidoreductase. This Staphylococcus aureus protein is Putative antiporter subunit mnhD2 (mnhD2).